We begin with the raw amino-acid sequence, 277 residues long: Basic leucine zipper transcriptional factor ATF-like 2 (277 aa).

3 disordered regions span residues 15–50 (LGES…HQQH), 126–146 (FQTP…CSHE), and 191–256 (SFSK…QKSS). The region spanning 18–81 (SQKQLKKKQK…AGWGRTLHLH (64 aa)) is the bZIP domain. The interval 20 to 42 (KQLKKKQKNRVAAQRSRQKHTSK) is basic motif. Over residues 41–50 (SKADALHQQH) the composition is skewed to basic and acidic residues. Positions 46–67 (LHQQHESLEKQNHALRKEIQAL) are leucine-zipper. Composition is skewed to polar residues over residues 213-227 (RQEQ…SSDS) and 247-256 (GSSTHWQKSS).

The protein belongs to the bZIP family. As to quaternary structure, heterodimer; heterodimerizes with JUN family proteins.

The protein localises to the nucleus. AP-1 family transcription factor that controls the differentiation of lineage-specific cells in the immune system. Selectively suppresses CCN1 transcription and hence blocks the downstream cell proliferation signals produced by CCN1 and inhibits CCN1-induced anchorage-independent growth and invasion in several cancer types. Possibly acts by interfering with AP-1 binding to CCN1 promoter. Following infection, participates in the differentiation of CD8(+) thymic conventional dendritic cells in the immune system. Acts via the formation of a heterodimer with JUN family proteins that recognizes and binds DNA sequence 5'-TGA[CG]TCA-3' and regulates expression of target genes. This chain is Basic leucine zipper transcriptional factor ATF-like 2 (Batf2), found in Mus musculus (Mouse).